The following is a 399-amino-acid chain: Mannan endo-1,4-beta-mannosidase 4 (399 aa).

A signal peptide spans 1 to 26; the sequence is MNNSIILIFVAILIIFPNEFSKPTRA. Substrate is bound by residues W88 and N203. The active-site Proton donor is the E204. Y279 provides a ligand contact to substrate. Catalysis depends on E318, which acts as the Nucleophile. A disulfide bridge connects residues C347 and C354. A substrate-binding site is contributed by W360.

Belongs to the glycosyl hydrolase 5 (cellulase A) family. Expressed in flowers and fruit pericarp.

It is found in the secreted. The enzyme catalyses Random hydrolysis of (1-&gt;4)-beta-D-mannosidic linkages in mannans, galactomannans and glucomannans.. Functionally, possesses endo-beta-mannanase and mannan transglycosylase activities. May be involved in cell wall degradation during fruit ripening. The protein is Mannan endo-1,4-beta-mannosidase 4 (MAN4) of Solanum lycopersicum (Tomato).